The sequence spans 357 residues: D-alanine--D-alanine ligase A (357 aa).

One can recognise an ATP-grasp domain in the interval 143–348 (KRLLREAGLA…YSKVIDVLIE (206 aa)). 171–226 (AGALGLPFFAKPARQGSSFGVSKVHDRDGFEQAVETALRYDSKALIEEFVDGREIE) is an ATP binding site. 3 residues coordinate Mg(2+): aspartate 302, glutamate 315, and asparagine 317.

This sequence belongs to the D-alanine--D-alanine ligase family. Requires Mg(2+) as cofactor. Mn(2+) serves as cofactor.

Its subcellular location is the cytoplasm. It carries out the reaction 2 D-alanine + ATP = D-alanyl-D-alanine + ADP + phosphate + H(+). It functions in the pathway cell wall biogenesis; peptidoglycan biosynthesis. Cell wall formation. The polypeptide is D-alanine--D-alanine ligase A (Mesorhizobium japonicum (strain LMG 29417 / CECT 9101 / MAFF 303099) (Mesorhizobium loti (strain MAFF 303099))).